A 379-amino-acid polypeptide reads, in one-letter code: Queuine tRNA-ribosyltransferase (379 aa).

The active-site Proton acceptor is the Asp94. Substrate-binding positions include 94–98 (DSGGF), Asp148, Gln191, and Gly218. The tract at residues 249–255 (GVGSPDS) is RNA binding. Residue Asp268 is the Nucleophile of the active site. Positions 273 to 277 (TRIAR) are RNA binding; important for wobble base 34 recognition. Zn(2+) is bound by residues Cys306, Cys308, Cys311, and His337.

The protein belongs to the queuine tRNA-ribosyltransferase family. As to quaternary structure, homodimer. Within each dimer, one monomer is responsible for RNA recognition and catalysis, while the other monomer binds to the replacement base PreQ1. Requires Zn(2+) as cofactor.

It catalyses the reaction 7-aminomethyl-7-carbaguanine + guanosine(34) in tRNA = 7-aminomethyl-7-carbaguanosine(34) in tRNA + guanine. The protein operates within tRNA modification; tRNA-queuosine biosynthesis. Its function is as follows. Catalyzes the base-exchange of a guanine (G) residue with the queuine precursor 7-aminomethyl-7-deazaguanine (PreQ1) at position 34 (anticodon wobble position) in tRNAs with GU(N) anticodons (tRNA-Asp, -Asn, -His and -Tyr). Catalysis occurs through a double-displacement mechanism. The nucleophile active site attacks the C1' of nucleotide 34 to detach the guanine base from the RNA, forming a covalent enzyme-RNA intermediate. The proton acceptor active site deprotonates the incoming PreQ1, allowing a nucleophilic attack on the C1' of the ribose to form the product. After dissociation, two additional enzymatic reactions on the tRNA convert PreQ1 to queuine (Q), resulting in the hypermodified nucleoside queuosine (7-(((4,5-cis-dihydroxy-2-cyclopenten-1-yl)amino)methyl)-7-deazaguanosine). The protein is Queuine tRNA-ribosyltransferase of Bacillus cytotoxicus (strain DSM 22905 / CIP 110041 / 391-98 / NVH 391-98).